The following is a 165-amino-acid chain: Small ribosomal subunit protein uS13 (165 aa).

Positions 139-165 (GMTIGVARKKAAQPQSQQSSSQQQKSS) are disordered. Over residues 153–165 (QSQQSSSQQQKSS) the composition is skewed to low complexity.

Belongs to the universal ribosomal protein uS13 family. In terms of assembly, part of the 30S ribosomal subunit. Forms a loose heterodimer with protein S19. Forms two bridges to the 50S subunit in the 70S ribosome.

In terms of biological role, located at the top of the head of the 30S subunit, it contacts several helices of the 16S rRNA. In the 70S ribosome it contacts the 23S rRNA (bridge B1a) and protein L5 of the 50S subunit (bridge B1b), connecting the 2 subunits; these bridges are implicated in subunit movement. The chain is Small ribosomal subunit protein uS13 from Saccharolobus solfataricus (strain ATCC 35092 / DSM 1617 / JCM 11322 / P2) (Sulfolobus solfataricus).